A 236-amino-acid polypeptide reads, in one-letter code: Alpha-tubulin N-acetyltransferase (236 aa).

One can recognise an N-acetyltransferase domain in the interval 21–201; sequence ASVPDGVSRW…NKFVVFHGFF (181 aa). Residues 134 to 147 and 171 to 180 each bind acetyl-CoA; these read FYVD…GYGK and SDKLLGFMKK. The disordered stretch occupies residues 217–236; that stretch reads SPTGAAAAATGTKAKNEMPG. A compositionally biased stretch (low complexity) spans 219–229; sequence TGAAAAATGTK.

It belongs to the acetyltransferase ATAT1 family.

The catalysed reaction is L-lysyl-[alpha-tubulin] + acetyl-CoA = N(6)-acetyl-L-lysyl-[alpha-tubulin] + CoA + H(+). Its function is as follows. Specifically acetylates 'Lys-40' in alpha-tubulin on the lumenal side of microtubules. Promotes microtubule destabilization and accelerates microtubule dynamics; this activity may be independent of acetylation activity. Acetylates alpha-tubulin with a slow enzymatic rate, due to a catalytic site that is not optimized for acetyl transfer. Enters the microtubule through each end and diffuses quickly throughout the lumen of microtubules. Acetylates only long/old microtubules because of its slow acetylation rate since it does not have time to act on dynamically unstable microtubules before the enzyme is released. This chain is Alpha-tubulin N-acetyltransferase, found in Leishmania braziliensis.